The chain runs to 177 residues: ATP synthase subunit b (177 aa).

A helical membrane pass occupies residues 19 to 39 (LFPNLPNFIAHVIATIVLVVI).

The protein belongs to the ATPase B chain family. As to quaternary structure, F-type ATPases have 2 components, F(1) - the catalytic core - and F(0) - the membrane proton channel. F(1) has five subunits: alpha(3), beta(3), gamma(1), delta(1), epsilon(1). F(0) has three main subunits: a(1), b(2) and c(10-14). The alpha and beta chains form an alternating ring which encloses part of the gamma chain. F(1) is attached to F(0) by a central stalk formed by the gamma and epsilon chains, while a peripheral stalk is formed by the delta and b chains.

It localises to the cell membrane. Functionally, f(1)F(0) ATP synthase produces ATP from ADP in the presence of a proton or sodium gradient. F-type ATPases consist of two structural domains, F(1) containing the extramembraneous catalytic core and F(0) containing the membrane proton channel, linked together by a central stalk and a peripheral stalk. During catalysis, ATP synthesis in the catalytic domain of F(1) is coupled via a rotary mechanism of the central stalk subunits to proton translocation. Its function is as follows. Component of the F(0) channel, it forms part of the peripheral stalk, linking F(1) to F(0). The polypeptide is ATP synthase subunit b (Mesoplasma florum (strain ATCC 33453 / NBRC 100688 / NCTC 11704 / L1) (Acholeplasma florum)).